The following is a 357-amino-acid chain: Anthranilate phosphoribosyltransferase (357 aa).

5-phospho-alpha-D-ribose 1-diphosphate is bound by residues G91, 94–95 (GD), T99, 101–104 (NIST), 119–127 (KHGNRSVSS), and S131. Anthranilate is bound at residue G91. S103 lines the Mg(2+) pocket. N122 serves as a coordination point for anthranilate. Residue R177 coordinates anthranilate. Mg(2+)-binding residues include D235 and E236.

This sequence belongs to the anthranilate phosphoribosyltransferase family. In terms of assembly, homodimer. The cofactor is Mg(2+).

The enzyme catalyses N-(5-phospho-beta-D-ribosyl)anthranilate + diphosphate = 5-phospho-alpha-D-ribose 1-diphosphate + anthranilate. The protein operates within amino-acid biosynthesis; L-tryptophan biosynthesis; L-tryptophan from chorismate: step 2/5. Catalyzes the transfer of the phosphoribosyl group of 5-phosphorylribose-1-pyrophosphate (PRPP) to anthranilate to yield N-(5'-phosphoribosyl)-anthranilate (PRA). The chain is Anthranilate phosphoribosyltransferase from Shewanella baltica (strain OS155 / ATCC BAA-1091).